A 771-amino-acid chain; its full sequence is 5-methyltetrahydropteroyltriglutamate--homocysteine methyltransferase (771 aa).

5-methyltetrahydropteroyltri-L-glutamate contacts are provided by residues 13–16 (RELK) and K128. L-homocysteine contacts are provided by residues 451-453 (IGS) and E504. L-methionine contacts are provided by residues 451–453 (IGS) and E504. 5-methyltetrahydropteroyltri-L-glutamate-binding positions include 535 to 536 (RC) and W581. D619 provides a ligand contact to L-homocysteine. L-methionine is bound at residue D619. Residue E625 participates in 5-methyltetrahydropteroyltri-L-glutamate binding. The Zn(2+) site is built by H661, C663, and E685. Residue H714 is the Proton donor of the active site. Position 746 (C746) interacts with Zn(2+).

The protein belongs to the vitamin-B12 independent methionine synthase family. It depends on Zn(2+) as a cofactor.

It carries out the reaction 5-methyltetrahydropteroyltri-L-glutamate + L-homocysteine = tetrahydropteroyltri-L-glutamate + L-methionine. It participates in amino-acid biosynthesis; L-methionine biosynthesis via de novo pathway; L-methionine from L-homocysteine (MetE route): step 1/1. In terms of biological role, catalyzes the transfer of a methyl group from 5-methyltetrahydrofolate to homocysteine resulting in methionine formation. The chain is 5-methyltetrahydropteroyltriglutamate--homocysteine methyltransferase from Nitrobacter winogradskyi (strain ATCC 25391 / DSM 10237 / CIP 104748 / NCIMB 11846 / Nb-255).